We begin with the raw amino-acid sequence, 450 residues long: UPF0236 protein in vanSb 3'region (450 aa).

It belongs to the UPF0236 family.

The polypeptide is UPF0236 protein in vanSb 3'region (Streptococcus gallolyticus (Streptococcus bovis biotype I)).